We begin with the raw amino-acid sequence, 1255 residues long: DNA-directed RNA polymerase subunit beta' (1255 aa).

Residues C60, C62, C77, and C80 each contribute to the Zn(2+) site. Mg(2+)-binding residues include D503, D505, and D507. The Zn(2+) site is built by C875, C950, C957, and C960.

The protein belongs to the RNA polymerase beta' chain family. In terms of assembly, the RNAP catalytic core consists of 2 alpha, 1 beta, 1 beta' and 1 omega subunit. When a sigma factor is associated with the core the holoenzyme is formed, which can initiate transcription. Mg(2+) serves as cofactor. It depends on Zn(2+) as a cofactor.

The enzyme catalyses RNA(n) + a ribonucleoside 5'-triphosphate = RNA(n+1) + diphosphate. In terms of biological role, DNA-dependent RNA polymerase catalyzes the transcription of DNA into RNA using the four ribonucleoside triphosphates as substrates. This Mycoplasma capricolum subsp. capricolum (strain California kid / ATCC 27343 / NCTC 10154) protein is DNA-directed RNA polymerase subunit beta'.